The chain runs to 640 residues: Probable threonine--tRNA ligase, cytoplasmic (640 aa).

The TGS domain maps to 1–63 (MYEVKLKVEL…LKDCKLELMT (63 aa)).

Belongs to the class-II aminoacyl-tRNA synthetase family.

It localises to the cytoplasm. It carries out the reaction tRNA(Thr) + L-threonine + ATP = L-threonyl-tRNA(Thr) + AMP + diphosphate + H(+). In Encephalitozoon cuniculi (strain GB-M1) (Microsporidian parasite), this protein is Probable threonine--tRNA ligase, cytoplasmic.